The following is a 193-amino-acid chain: Chaperone protein TorD (193 aa).

It belongs to the TorD/DmsD family. TorD subfamily.

The protein resides in the cytoplasm. Functionally, involved in the biogenesis of TorA. Acts on TorA before the insertion of the molybdenum cofactor and, as a result, probably favors a conformation of the apoenzyme that is competent for acquiring the cofactor. This chain is Chaperone protein TorD, found in Histophilus somni (strain 129Pt) (Haemophilus somnus).